The following is a 20-amino-acid chain: Thylakoid lumenal 22 kDa protein (20 aa).

It localises to the plastid. The protein resides in the chloroplast thylakoid lumen. This Spinacia oleracea (Spinach) protein is Thylakoid lumenal 22 kDa protein.